We begin with the raw amino-acid sequence, 317 residues long: 4-diphosphocytidyl-2-C-methyl-D-erythritol kinase (317 aa).

Residue Lys11 is part of the active site. An ATP-binding site is contributed by 99–109 (PVAAGLAGGST). The active site involves Asp141.

The protein belongs to the GHMP kinase family. IspE subfamily.

It catalyses the reaction 4-CDP-2-C-methyl-D-erythritol + ATP = 4-CDP-2-C-methyl-D-erythritol 2-phosphate + ADP + H(+). It functions in the pathway isoprenoid biosynthesis; isopentenyl diphosphate biosynthesis via DXP pathway; isopentenyl diphosphate from 1-deoxy-D-xylulose 5-phosphate: step 3/6. In terms of biological role, catalyzes the phosphorylation of the position 2 hydroxy group of 4-diphosphocytidyl-2C-methyl-D-erythritol. The chain is 4-diphosphocytidyl-2-C-methyl-D-erythritol kinase from Nostoc punctiforme (strain ATCC 29133 / PCC 73102).